The primary structure comprises 228 residues: Prolactin-2B1 (228 aa).

Residues methionine 1 to serine 31 form the signal peptide. 2 cysteine pairs are disulfide-bonded: cysteine 89–cysteine 194 and cysteine 203–cysteine 228. Asparagine 173 carries an N-linked (GlcNAc...) asparagine glycan.

Belongs to the somatotropin/prolactin family. As to expression, expression restricted to the placenta in trophoblast cells within the labyrinth zone.

The protein resides in the secreted. In Rattus norvegicus (Rat), this protein is Prolactin-2B1 (Prl2b1).